Here is a 465-residue protein sequence, read N- to C-terminus: Cytochrome P450 85A2 (465 aa).

The helical transmembrane segment at 2-22 (GIMMMILGLLVIIVCLCTALL) threads the bilayer. Cysteine 415 is a heme binding site. Residue cysteine 462 is the site of S-farnesyl cysteine attachment. The short motif at 462–465 (CSPY) is the Farnesylation CAAX motif element.

It belongs to the cytochrome P450 family. It depends on heme as a cofactor. Post-translationally, isoprenylated (farnesylated); this addition of a 15-carbon farnesyl isoprenoid to the carboxy terminus is required for endoplasmic reticulum localization and essential for the biosynthesis of brassinolide. Expressed in stems, hypocotyls, leaves, siliques, shoots, and roots, with a higher expression in apical shoots.

The protein resides in the membrane. It localises to the endoplasmic reticulum. It carries out the reaction 6-deoxoteasterone + reduced [NADPH--hemoprotein reductase] + O2 = 6alpha-hydroxyteasterone + oxidized [NADPH--hemoprotein reductase] + H2O + H(+). The enzyme catalyses 6alpha-hydroxytyphasterol + reduced [NADPH--hemoprotein reductase] + O2 = teasterone + oxidized [NADPH--hemoprotein reductase] + 2 H2O + H(+). It catalyses the reaction 3-dehydro-6-deoxoteasterone + reduced [NADPH--hemoprotein reductase] + O2 = 3-dehydro-6alpha-hydroxyteasterone + oxidized [NADPH--hemoprotein reductase] + H2O + H(+). The catalysed reaction is 3-dehydro-6alpha-hydroxyteasterone + reduced [NADPH--hemoprotein reductase] + O2 = 3-dehydroteasterone + oxidized [NADPH--hemoprotein reductase] + 2 H2O + H(+). It carries out the reaction 6-deoxotyphasterol + reduced [NADPH--hemoprotein reductase] + O2 = 6alpha-hydroxytyphasterol + oxidized [NADPH--hemoprotein reductase] + H2O + H(+). The enzyme catalyses 6alpha-hydroxytyphasterol + reduced [NADPH--hemoprotein reductase] + O2 = typhasterol + oxidized [NADPH--hemoprotein reductase] + 2 H2O + H(+). It catalyses the reaction 6-deoxocastasterone + reduced [NADPH--hemoprotein reductase] + O2 = 6alpha-hydroxycastasterone + oxidized [NADPH--hemoprotein reductase] + H2O + H(+). The catalysed reaction is 6alpha-hydroxycastasterone + reduced [NADPH--hemoprotein reductase] + O2 = castasterone + oxidized [NADPH--hemoprotein reductase] + 2 H2O + H(+). It carries out the reaction 6-deoxo-28-norteasterone + 2 reduced [NADPH--hemoprotein reductase] + 2 O2 = 28-norteasterone + 2 oxidized [NADPH--hemoprotein reductase] + 3 H2O + 2 H(+). The enzyme catalyses 6-deoxo-28-norteasterone + reduced [NADPH--hemoprotein reductase] + O2 = 6alpha-hydroxy-28-norteasterone + oxidized [NADPH--hemoprotein reductase] + H2O + H(+). It catalyses the reaction 6alpha-hydroxy-28-norteasterone + reduced [NADPH--hemoprotein reductase] + O2 = 28-norteasterone + oxidized [NADPH--hemoprotein reductase] + 2 H2O + H(+). The catalysed reaction is 6-deoxo-28-nortyphasterol + 2 reduced [NADPH--hemoprotein reductase] + 2 O2 = 28-nortyphasterol + 2 oxidized [NADPH--hemoprotein reductase] + 3 H2O + 2 H(+). It carries out the reaction 6-deoxo-28-nortyphasterol + reduced [NADPH--hemoprotein reductase] + O2 = 6alpha-hydroxy-28-nortyphasterol + oxidized [NADPH--hemoprotein reductase] + H2O + H(+). The enzyme catalyses 6alpha-hydroxy-28-nortyphasterol + reduced [NADPH--hemoprotein reductase] + O2 = 28-nortyphasterol + oxidized [NADPH--hemoprotein reductase] + 2 H2O + H(+). It catalyses the reaction 6-deoxo-28-norcastasterone + 2 reduced [NADPH--hemoprotein reductase] + 2 O2 = 28-norcastasterone + 2 oxidized [NADPH--hemoprotein reductase] + 3 H2O + 2 H(+). The catalysed reaction is 6-deoxo-28-norcastasterone + reduced [NADPH--hemoprotein reductase] + O2 = 6alpha-hydroxy-28-norcastasterone + oxidized [NADPH--hemoprotein reductase] + H2O + H(+). It carries out the reaction 6alpha-hydroxy-28-norcastasterone + reduced [NADPH--hemoprotein reductase] + O2 = 28-norcastasterone + oxidized [NADPH--hemoprotein reductase] + 2 H2O + H(+). The enzyme catalyses 3-dehydro-6-deoxo-28-norteasterone + 2 reduced [NADPH--hemoprotein reductase] + 2 O2 = 6-dehydro-28-norteasterone + 2 oxidized [NADPH--hemoprotein reductase] + 3 H2O + 2 H(+). It catalyses the reaction 3-dehydro-6-deoxo-28-norteasterone + reduced [NADPH--hemoprotein reductase] + O2 = 3-dehydro-6alpha-hydroxy-28-norteasterone + oxidized [NADPH--hemoprotein reductase] + H2O + H(+). The catalysed reaction is 3-dehydro-6alpha-hydroxy-28-norteasterone + reduced [NADPH--hemoprotein reductase] + O2 = 6-dehydro-28-norteasterone + oxidized [NADPH--hemoprotein reductase] + 2 H2O + H(+). It carries out the reaction teasterone + reduced [NADPH--hemoprotein reductase] + O2 = 7-oxateasterone + oxidized [NADPH--hemoprotein reductase] + H2O + H(+). The enzyme catalyses castasterone + reduced [NADPH--hemoprotein reductase] + O2 = brassinolide + oxidized [NADPH--hemoprotein reductase] + H2O + H(+). It catalyses the reaction typhasterol + reduced [NADPH--hemoprotein reductase] + O2 = 7-oxatyphasterol + oxidized [NADPH--hemoprotein reductase] + H2O + H(+). The catalysed reaction is 6-deoxocastasterone + 2 reduced [NADPH--hemoprotein reductase] + 2 O2 = castasterone + 2 oxidized [NADPH--hemoprotein reductase] + 3 H2O + 2 H(+). It carries out the reaction 6-deoxoteasterone + 2 reduced [NADPH--hemoprotein reductase] + 2 O2 = teasterone + 2 oxidized [NADPH--hemoprotein reductase] + 3 H2O + 2 H(+). The enzyme catalyses 6-deoxotyphasterol + 2 reduced [NADPH--hemoprotein reductase] + 2 O2 = typhasterol + 2 oxidized [NADPH--hemoprotein reductase] + 3 H2O + 2 H(+). It catalyses the reaction 3-dehydro-6-deoxoteasterone + 2 reduced [NADPH--hemoprotein reductase] + 2 O2 = 3-dehydroteasterone + 2 oxidized [NADPH--hemoprotein reductase] + 3 H2O + 2 H(+). It functions in the pathway plant hormone biosynthesis; brassinosteroid biosynthesis. Functionally, mediates Baeyer-Villiger oxidation and catalyzes the C6-oxidation step and lactonization in brassinosteroids biosynthesis. Converts 6-deoxocastasterone (6-deoxoCS) to castasterone (CS), and castasterone to brassinolide (BL). May also convert 6-deoxoteasterone (6-deoxoTE) to teasterone (TE), 3-dehydro-6-deoxoteasterone (6-deoxo3DT, 6-deoxo-3-DHT) to 3-dehydroteasterone (3DT, 3-DHT), and 6-deoxotyphasterol (6-deoxoTY) to typhasterol (TY). Also seems to be able to convert teasterone (TE) and typhasterol (TY) to 7-oxateasterone (7-OXTE) and 7-oxatyphasterol (7-OXTY), respectively. Catalyzes the conversion of 6-deoxo-28-norteasterone (6-deoxo-28-norTE) to 28-norteasterone (28-norTE), 6-deoxo-28-nordeoxoteasterone (6-deoxo-28-nor-3-DHT) to 28-nordeoxoteasterone (28-nor-3-DHT), 6-deoxo-28-nortyphasterol (6-deoxo-28-norTY) to 28-nortyphasterol (28-norTY) and 6-deoxo-28-norcastasterone (6-deoxo-28-norCS) to 28-norcastasterone (28-norCS). Involved in a negative regulation of responses to abscisic acid (ABA) and drought tolerance. In Arabidopsis thaliana (Mouse-ear cress), this protein is Cytochrome P450 85A2 (CYP85A2).